We begin with the raw amino-acid sequence, 122 residues long: MIQPQTYSNVADNSGARKLMCIRVLKASNRQYAHIGDVIIAIIKEAVPNMPLKESEIVRAVVVRTCKELKRDNGMIIRSDDNAAVIVDQEGNPRGTRVFGSVARELRQLNFAKIVSLAPEVL.

It belongs to the universal ribosomal protein uL14 family. As to quaternary structure, part of the 50S ribosomal subunit.

It is found in the plastid. The protein resides in the chloroplast. In terms of biological role, binds to 23S rRNA. The protein is Large ribosomal subunit protein uL14c of Cycas taitungensis (Prince sago).